The primary structure comprises 201 residues: Probable nicotinate-nucleotide adenylyltransferase (201 aa).

The protein belongs to the NadD family.

It catalyses the reaction nicotinate beta-D-ribonucleotide + ATP + H(+) = deamido-NAD(+) + diphosphate. The protein operates within cofactor biosynthesis; NAD(+) biosynthesis; deamido-NAD(+) from nicotinate D-ribonucleotide: step 1/1. Functionally, catalyzes the reversible adenylation of nicotinate mononucleotide (NaMN) to nicotinic acid adenine dinucleotide (NaAD). This is Probable nicotinate-nucleotide adenylyltransferase from Neisseria meningitidis serogroup C / serotype 2a (strain ATCC 700532 / DSM 15464 / FAM18).